The following is a 371-amino-acid chain: Flagellar P-ring protein (371 aa).

The N-terminal stretch at 1-25 is a signal peptide; sequence MTMRVCKWLLTFALLFAATLTPAHS.

This sequence belongs to the FlgI family. In terms of assembly, the basal body constitutes a major portion of the flagellar organelle and consists of four rings (L,P,S, and M) mounted on a central rod.

Its subcellular location is the periplasm. It is found in the bacterial flagellum basal body. Assembles around the rod to form the L-ring and probably protects the motor/basal body from shearing forces during rotation. The chain is Flagellar P-ring protein from Sinorhizobium fredii (strain NBRC 101917 / NGR234).